Here is a 149-residue protein sequence, read N- to C-terminus: MEQLISFFDRSKGKWISQRTTYKLSNKQMNSLQSSIIIKPDQSSSNSQLIASLRWGEISRQIIKNLNNQDFVNGNFKFHLRFTNQFNTKQVVTLCSITDKSLITFKTRYGSTTVDETYWFATDNLRLSTSIIKQCNFCVAVSFCSEIKI.

This sequence belongs to the CpcS/CpeS biliprotein lyase family.

Its subcellular location is the plastid. The protein resides in the chloroplast. Its function is as follows. Might function to covalently attach a chromophore to Cys residue(s) of phycobiliproteins. In Porphyra purpurea (Red seaweed), this protein is Chromophore lyase CpcS/CpeS homolog.